The primary structure comprises 376 residues: Chaperone protein DnaJ (376 aa).

The region spanning 5-69 is the J domain; the sequence is DYYEVLGVSK…QKRAQYDQYG (65 aa). Residues 133-215 form a CR-type zinc finger; sequence GKDAEIEIPR…CHGKGRVTKT (83 aa). Residues cysteine 146, cysteine 149, cysteine 163, cysteine 166, cysteine 189, cysteine 192, cysteine 203, and cysteine 206 each coordinate Zn(2+). 4 CXXCXGXG motif repeats span residues 146 to 153, 163 to 170, 189 to 196, and 203 to 210; these read CDTCHGSG, CSHCGGKG, CQYCNGTG, and CPTCHGKG.

This sequence belongs to the DnaJ family. In terms of assembly, homodimer. Zn(2+) serves as cofactor.

The protein resides in the cytoplasm. Its function is as follows. Participates actively in the response to hyperosmotic and heat shock by preventing the aggregation of stress-denatured proteins and by disaggregating proteins, also in an autonomous, DnaK-independent fashion. Unfolded proteins bind initially to DnaJ; upon interaction with the DnaJ-bound protein, DnaK hydrolyzes its bound ATP, resulting in the formation of a stable complex. GrpE releases ADP from DnaK; ATP binding to DnaK triggers the release of the substrate protein, thus completing the reaction cycle. Several rounds of ATP-dependent interactions between DnaJ, DnaK and GrpE are required for fully efficient folding. Also involved, together with DnaK and GrpE, in the DNA replication of plasmids through activation of initiation proteins. In Listeria monocytogenes serotype 4b (strain CLIP80459), this protein is Chaperone protein DnaJ.